We begin with the raw amino-acid sequence, 334 residues long: Putative transport protein MJ1177 (334 aa).

A run of 7 helical transmembrane segments spans residues 13-33, 61-81, 138-158, 191-211, 234-254, 259-279, and 293-313; these read VIVGLLIMLLYIIWPFIDVLA, LAISIYILPIMTITIYALLTF, IIDVGYLIVKVIMVLFLTFYF, SYKNLFISCVSLSIIITILSY, LLPILGGWMVYISIAIYFFLI, KAVFMFIYGELFLSIAPDFVI, and VLVVIAFLMAPLSLGLSGFAI.

It belongs to the autoinducer-2 exporter (AI-2E) (TC 2.A.86) family.

It localises to the cell membrane. The chain is Putative transport protein MJ1177 from Methanocaldococcus jannaschii (strain ATCC 43067 / DSM 2661 / JAL-1 / JCM 10045 / NBRC 100440) (Methanococcus jannaschii).